The chain runs to 384 residues: MPQLAGKLILAGLIPLGAWVLHGFASCNGLIQMFEDFGKQTVLSDGVTDYTGAFTGLEGLDRLLRTLLNFFWPVANGHDWALSLHAFMFAGQGVPLLVLNMLEGARPGNKSLVVSYVTVFGILYMVVGLAIMAPLYLFLHLLTSRTATAPSKAKVAVDPNTAKAVGFGVFVGYVLPTIFMSLPHPSLLSTDTKVLSVVFWQAVPLWASVCAYFASTALGQSATSRSSSNLPSALGAVYAASLIIATATHVATFAISANLSDTWSGIFTFLIPPNPFNTDMRISSFLEGATWFLQWDYTMMSLAYMVWAIGIRHGVEVPRSSHHFETLGKIALRSMAKLLVMGPIGAALSLVWERDQLLWQLDSESGEKGEKNRSRRMSRKWMFS.

Residues 1-25 form the signal peptide; it reads MPQLAGKLILAGLIPLGAWVLHGFA. A helical membrane pass occupies residues 82-102; sequence LSLHAFMFAGQGVPLLVLNML. N-linked (GlcNAc...) asparagine glycosylation occurs at asparagine 109. A run of 4 helical transmembrane segments spans residues 119–139, 164–184, 194–214, and 235–255; these read VFGI…YLFL, AVGF…SLPH, VLSV…AYFA, and GAVY…TFAI. A glycan (N-linked (GlcNAc...) asparagine) is linked at asparagine 258. The next 2 membrane-spanning stretches (helical) occupy residues 291–311 and 330–350; these read WFLQ…AIGI and IALR…ALSL. Asparagine 372 carries an N-linked (GlcNAc...) asparagine glycan.

It belongs to the membrane-bound ascI terpene cyclase family.

It localises to the membrane. The enzyme catalyses 16-hydroxy-ilicicolin A epoxide = ascofuranol. Its pathway is secondary metabolite biosynthesis; terpenoid biosynthesis. Functionally, epoxide hydrolase; part of the asc-2 gene cluster that mediates the biosynthesis of ascofuranone, a strong inhibitor of cyanide-insensitive alternative oxidases and a promising drug candidate against African trypanosomiasis. The first step in the pathway is performed by the non-reducing polyketide synthase ascC that produces orsellinic acid by condensing acetyl-CoA with 3 malonyl-CoA units. Orsellinic acid is then prenylated by the prenyltransferase ascA to yield ilicicolinic acid B. Ilicicolinic acid B is further reduced to ilicicolin B by the reductase ascB. The halogenase ascD then chlorinates ilicicolin B to produce ilicicolin A which is converted to ilicicolin A epoxide by the cytochrome P450 monooxygenase ascE that catalyzes stereoselective epoxidation of the terminal double bond of the prenyl group. Ilicicolin A epoxide is the last common precursor for the biosynthesis of ascofuranone and ascochlorin. The terpene cyclase ascF produces a monocyclic terpene, and the cyclization reaction is proposed to be initiated by protonation of the terminal epoxide of ilicicolin A epoxide to generate a monocyclic tertiarycation, which is followed by a series of hydride and methyl shifts with abstraction of proton, leading to the formation of the (14S,15R,19R)-trimethylcyclohexanone ring structure of ilicicolin C, which is finally reduced to ascochlorin by the dehydrogenase ascG. On the other hand, ilicicolin A epoxide is hydroxylated by the cytochrome P450 monooxygenase ascH, and the resultant product is cyclized by the terpene cyclase ascI to ascofuranol via protonation-initiated epoxide ring opening, which facilitates the 6-endo-tet cyclization to form the tetrahy-drofuran ring. Finally, ascofuranol is oxidized into ascofuranone by ascJ. In Acremonium egyptiacum (Oospora egyptiaca), this protein is Terpene cyclase ascI.